The primary structure comprises 362 residues: 3-isopropylmalate dehydrogenase (362 aa).

78 to 91 (GPQWDTLPSDKRPE) lines the NAD(+) pocket. 4 residues coordinate substrate: Arg-98, Arg-108, Arg-136, and Asp-226. Asp-226, Asp-250, and Asp-254 together coordinate Mg(2+). Residue 284 to 296 (GSAPDIAGQDKAN) coordinates NAD(+).

Belongs to the isocitrate and isopropylmalate dehydrogenases family. LeuB type 1 subfamily. Homodimer. The cofactor is Mg(2+). It depends on Mn(2+) as a cofactor.

Its subcellular location is the cytoplasm. The catalysed reaction is (2R,3S)-3-isopropylmalate + NAD(+) = 4-methyl-2-oxopentanoate + CO2 + NADH. Its pathway is amino-acid biosynthesis; L-leucine biosynthesis; L-leucine from 3-methyl-2-oxobutanoate: step 3/4. Functionally, catalyzes the oxidation of 3-carboxy-2-hydroxy-4-methylpentanoate (3-isopropylmalate) to 3-carboxy-4-methyl-2-oxopentanoate. The product decarboxylates to 4-methyl-2 oxopentanoate. This chain is 3-isopropylmalate dehydrogenase, found in Gloeobacter violaceus (strain ATCC 29082 / PCC 7421).